Reading from the N-terminus, the 226-residue chain is Teichuronic acid biosynthesis protein TuaF (226 aa).

Transmembrane regions (helical) follow at residues 15–35 and 202–222; these read NIIW…ILPS and VLGV…PEFF.

The protein resides in the cell membrane. Its pathway is cell wall biogenesis; teichuronic acid biosynthesis. The protein is Teichuronic acid biosynthesis protein TuaF (tuaF) of Bacillus subtilis (strain 168).